We begin with the raw amino-acid sequence, 121 residues long: Large ribosomal subunit protein bL12 (121 aa).

This sequence belongs to the bacterial ribosomal protein bL12 family. Homodimer. Part of the ribosomal stalk of the 50S ribosomal subunit. Forms a multimeric L10(L12)X complex, where L10 forms an elongated spine to which 2 to 4 L12 dimers bind in a sequential fashion. Binds GTP-bound translation factors.

Forms part of the ribosomal stalk which helps the ribosome interact with GTP-bound translation factors. Is thus essential for accurate translation. The chain is Large ribosomal subunit protein bL12 from Lactobacillus delbrueckii subsp. bulgaricus (strain ATCC BAA-365 / Lb-18).